A 675-amino-acid polypeptide reads, in one-letter code: G-protein coupled receptor moody (675 aa).

The Extracellular segment spans residues 1 to 44 (MSDETTGSLGDAFSPMDTPTTTIMPPPADVDESGFSHSLLTFAA). A helical membrane pass occupies residues 45-65 (VMTFLIMIVGICGNLLTVVAL). Over 66-73 (LKCPKVRN) the chain is Cytoplasmic. Residues 74–94 (VAAAFIISLCIADLLFCALVL) form a helical membrane-spanning segment. Residues 95 to 115 (PFQGLRFVQGTWRHGEVLCRL) lie on the Extracellular side of the membrane. Cysteines 113 and 192 form a disulfide. A helical transmembrane segment spans residues 116–136 (IPFIQYGNIGVSLLCIAMITI). Residues 137 to 156 (NRYVMITHYSLYNRIYKRHW) lie on the Cytoplasmic side of the membrane. A helical transmembrane segment spans residues 157–177 (IAIMIAACWLFSYGMQLPTLL). Over 178–206 (GAWGRFGYDARLQTCSIMSDRHGHSSKTT) the chain is Extracellular. The chain crosses the membrane as a helical span at residues 207–227 (LFITAFVIPCLVIIACYAKIF). The Cytoplasmic segment spans residues 228 to 327 (WVVHKSEQRL…AKRNEWRITK (100 aa)). Residues 258-316 (TSMPSGDGANPSQVPAGCRVSSDSSSNYSTDVPDTTPGGAGGGAGVKQQPSRVKDQREV) form a disordered region. The span at 278–294 (SSDSSSNYSTDVPDTTP) shows a compositional bias: low complexity. A helical transmembrane segment spans residues 328-348 (MVLAIFLSFVICYLPITIVKV). At 349-359 (ADKDVEHPSLH) the chain is on the extracellular side. A helical membrane pass occupies residues 360–380 (IFSYIMLYLSACINPIIYVIM). At 381–675 (NKQYRKAYKT…LMDKKKFPKD (295 aa)) the chain is on the cytoplasmic side. 2 disordered regions span residues 475 to 568 (SKSS…GNGS) and 588 to 675 (LPPT…FPKD). The span at 536-551 (SSVISANPSSSPSPSS) shows a compositional bias: low complexity. The span at 552-565 (SGGGIYRPGIGSMG) shows a compositional bias: gly residues. Residues 666–675 (LMDKKKFPKD) are compositionally biased toward basic and acidic residues.

The protein belongs to the G-protein coupled receptor 1 family.

It localises to the cell membrane. Functionally, required in glia to regulate the acute sensitivity to cocaine and to continuously maintain the proper blood-brain barrier (BBB) function. A moody-mediated signaling pathway functions in glia to regulate nervous system insulation and drug-related behaviors. The chain is G-protein coupled receptor moody from Drosophila pseudoobscura pseudoobscura (Fruit fly).